Here is a 159-residue protein sequence, read N- to C-terminus: Ribosome maturation factor RimP (159 aa).

Belongs to the RimP family.

It localises to the cytoplasm. In terms of biological role, required for maturation of 30S ribosomal subunits. This is Ribosome maturation factor RimP from Streptococcus agalactiae serotype III (strain NEM316).